Reading from the N-terminus, the 256-residue chain is Type III pantothenate kinase (256 aa).

7–14 (DVGNTRLK) is an ATP binding site. Residues Tyr-96 and 103–106 (GADR) each bind substrate. Catalysis depends on Asp-105, which acts as the Proton acceptor. Thr-133 contributes to the ATP binding site. Thr-183 lines the substrate pocket.

The protein belongs to the type III pantothenate kinase family. In terms of assembly, homodimer. NH4(+) serves as cofactor. K(+) is required as a cofactor.

The protein resides in the cytoplasm. The enzyme catalyses (R)-pantothenate + ATP = (R)-4'-phosphopantothenate + ADP + H(+). It participates in cofactor biosynthesis; coenzyme A biosynthesis; CoA from (R)-pantothenate: step 1/5. Functionally, catalyzes the phosphorylation of pantothenate (Pan), the first step in CoA biosynthesis. In Verminephrobacter eiseniae (strain EF01-2), this protein is Type III pantothenate kinase.